The following is a 493-amino-acid chain: Matrilin-1 (493 aa).

The signal sequence occupies residues 1 to 23; sequence MDGIFCALPLSLLLLLQSCGVWG. The 197-residue stretch at 24-220 folds into the VWFA 1 domain; that stretch reads APPQPRGTLC…THKFQEAFCV (197 aa). Asparagine 74 carries an N-linked (GlcNAc...) asparagine glycan. Residues 221–261 form the EGF-like domain; it reads VSDLCATGDHDCEQICISTPGSYKCACKEGFTLNNDGKTCS. Intrachain disulfides connect cysteine 225-cysteine 236, cysteine 232-cysteine 245, and cysteine 247-cysteine 260. One can recognise a VWFA 2 domain in the interval 262 to 450; sequence ACSGGSGSAL…GKKLQMKICV (189 aa). A coiled-coil region spans residues 462 to 492; the sequence is KFQTKVEELINTLQQKLEAVAKRIEALENKI.

As to quaternary structure, homotrimer. Expressed in xyphoid cartilage and chondrocytes (at protein level).

It localises to the secreted. It is found in the extracellular space. Its subcellular location is the extracellular matrix. Functionally, a major component of the extracellular matrix of non-articular cartilage. Binds to type 2 collagens and forms long concatenated protein networks as part of the extracellular matrix. Required for the network-like organization and bundling of collagen fibrils surrounding chondrocytes in the zones of maturation and hypertrophy. Required for mechanotransduction and adaption to mechanical loading in cartilage chondrocytes, resulting in an increase in expression of the extracellular matrix components ACAN and COL2A1. Acts as a moderator of angiogenesis in response to injury. This Gallus gallus (Chicken) protein is Matrilin-1.